The sequence spans 715 residues: Photosystem I P700 chlorophyll a apoprotein A1 (715 aa).

8 helical membrane-spanning segments follow: residues 60 to 83, 146 to 169, 185 to 209, 281 to 299, 336 to 359, 375 to 401, 423 to 445, and 521 to 539; these read VFSA…FHGA, LYST…FHYH, LNHH…HVSL, TVHH…GHMY, WHAQ…HHMY, LSLF…IFMV, AIIS…LYIH, and FLVH…LILL. The [4Fe-4S] cluster site is built by Cys563 and Cys572. A run of 2 helical transmembrane segments spans residues 579 to 600 and 654 to 676; these read HVFL…HFSW and LSAY…MFLF. His665 lines the chlorophyll a' pocket. Chlorophyll a is bound by residues Met673 and Tyr681. Trp682 provides a ligand contact to phylloquinone. A helical transmembrane segment spans residues 714 to 715; it reads AE.

The protein belongs to the PsaA/PsaB family. In terms of assembly, the PsaA/B heterodimer binds the P700 chlorophyll special pair and subsequent electron acceptors. PSI consists of a core antenna complex that captures photons, and an electron transfer chain that converts photonic excitation into a charge separation. The eukaryotic PSI reaction center is composed of at least 11 subunits. P700 is a chlorophyll a/chlorophyll a' dimer, A0 is one or more chlorophyll a, A1 is one or both phylloquinones and FX is a shared 4Fe-4S iron-sulfur center. serves as cofactor.

It is found in the plastid. Its subcellular location is the chloroplast thylakoid membrane. It catalyses the reaction reduced [plastocyanin] + hnu + oxidized [2Fe-2S]-[ferredoxin] = oxidized [plastocyanin] + reduced [2Fe-2S]-[ferredoxin]. Its function is as follows. PsaA and PsaB bind P700, the primary electron donor of photosystem I (PSI), as well as the electron acceptors A0, A1 and FX. PSI is a plastocyanin-ferredoxin oxidoreductase, converting photonic excitation into a charge separation, which transfers an electron from the donor P700 chlorophyll pair to the spectroscopically characterized acceptors A0, A1, FX, FA and FB in turn. Oxidized P700 is reduced on the lumenal side of the thylakoid membrane by plastocyanin. This Phlegmariurus squarrosus (Rock tassel fern) protein is Photosystem I P700 chlorophyll a apoprotein A1.